The primary structure comprises 537 residues: Cytochrome P450 monooxygenase yanC (537 aa).

The signal sequence occupies residues 1-21 (MALVHLTALAACGLLLVILRA). C449 is a binding site for heme.

The protein belongs to the cytochrome P450 family. The cofactor is heme.

Its pathway is secondary metabolite biosynthesis; terpenoid biosynthesis. In terms of biological role, cytochrome P450 monooxygenase; part of the gene cluster that mediates the biosynthesis of yanuthone D, a fungal isoprenoid epoxycyclohexenone that acts as an antibiotic against fungi and bacteria. The first step of the pathway is the synthesis of 6-methylsalicylic acid (6-MSA) by the polyketide synthase yanA. 6-MSA is then converted to m-cresol by the decarboxylase yanB. The cytochrome P450 monooxygenase yanC then catalyzes the oxidation of m-cresol to toluquinol. Epoxidation of toluquinol is then performed by the short chain dehydrogenase yanD, with the help of yanE, and a further prenylation by yanG leads to 7-deacetoxyyanuthone A. The next step is the hydroxylation of C-22 of 7-deacetoxyyanuthone A by the cytochrome P450 monooxygenase yanH to yield 22-deacetylyanuthone A. O-Mevalon transferase yanI then attaches mevalon to the hydroxyl group of 22-deacetylyanuthone A to produce yanuthone E. Finally, the FAD-dependent monooxygenase yanF oxidizes the hydroxyl group at C15 of yanuthone E to form yanuthone D. Furthermore, several branching points in the pathway lead to the production of yanuthones F and G from 7-deacetoxyyanuthone A; yanuthones H and I from 22-deacetylyanuthone A; and yanuthone J from yanuthone E. YanC is also involved in the synthesis of yanuthone X1 which does not have 6-methylsalicylic acid (6-MSA) as precursor. In Aspergillus niger (strain ATCC 1015 / CBS 113.46 / FGSC A1144 / LSHB Ac4 / NCTC 3858a / NRRL 328 / USDA 3528.7), this protein is Cytochrome P450 monooxygenase yanC.